Here is a 144-residue protein sequence, read N- to C-terminus: Transcription antitermination protein NusB (144 aa).

The protein belongs to the NusB family.

Its function is as follows. Involved in transcription antitermination. Required for transcription of ribosomal RNA (rRNA) genes. Binds specifically to the boxA antiterminator sequence of the ribosomal RNA (rrn) operons. This Buchnera aphidicola subsp. Baizongia pistaciae (strain Bp) protein is Transcription antitermination protein NusB.